A 702-amino-acid chain; its full sequence is Polyribonucleotide nucleotidyltransferase (702 aa).

Aspartate 491 and aspartate 497 together coordinate Mg(2+). The KH domain occupies 558-618 (PKMKTFMIPV…TAIEKAYQLI (61 aa)). Residues 628 to 696 (GEKIIGPVVK…GKGKIKLQLI (69 aa)) form the S1 motif domain.

Belongs to the polyribonucleotide nucleotidyltransferase family. It depends on Mg(2+) as a cofactor.

Its subcellular location is the cytoplasm. It carries out the reaction RNA(n+1) + phosphate = RNA(n) + a ribonucleoside 5'-diphosphate. In terms of biological role, involved in mRNA degradation. Catalyzes the phosphorolysis of single-stranded polyribonucleotides processively in the 3'- to 5'-direction. This chain is Polyribonucleotide nucleotidyltransferase, found in Spiroplasma citri.